A 136-amino-acid polypeptide reads, in one-letter code: Large ribosomal subunit protein uL16 (136 aa).

Belongs to the universal ribosomal protein uL16 family. Part of the 50S ribosomal subunit.

Functionally, binds 23S rRNA and is also seen to make contacts with the A and possibly P site tRNAs. This is Large ribosomal subunit protein uL16 from Pseudoalteromonas atlantica (strain T6c / ATCC BAA-1087).